Here is a 353-residue protein sequence, read N- to C-terminus: Nicotinate-nucleotide--dimethylbenzimidazole phosphoribosyltransferase (353 aa).

E319 functions as the Proton acceptor in the catalytic mechanism.

This sequence belongs to the CobT family.

It catalyses the reaction 5,6-dimethylbenzimidazole + nicotinate beta-D-ribonucleotide = alpha-ribazole 5'-phosphate + nicotinate + H(+). It functions in the pathway nucleoside biosynthesis; alpha-ribazole biosynthesis; alpha-ribazole from 5,6-dimethylbenzimidazole: step 1/2. Functionally, catalyzes the synthesis of alpha-ribazole-5'-phosphate from nicotinate mononucleotide (NAMN) and 5,6-dimethylbenzimidazole (DMB). The sequence is that of Nicotinate-nucleotide--dimethylbenzimidazole phosphoribosyltransferase from Chlorobaculum parvum (strain DSM 263 / NCIMB 8327) (Chlorobium vibrioforme subsp. thiosulfatophilum).